We begin with the raw amino-acid sequence, 146 residues long: Flavodoxin (146 aa).

The 140-residue stretch at 4–143 folds into the Flavodoxin-like domain; the sequence is SLIVYGSTTG…EIVSWGSGIA (140 aa).

This sequence belongs to the flavodoxin family. FMN is required as a cofactor.

In terms of biological role, low-potential electron donor to a number of redox enzymes. This is Flavodoxin from Maridesulfovibrio salexigens (strain ATCC 14822 / DSM 2638 / NCIMB 8403 / VKM B-1763) (Desulfovibrio salexigens).